Reading from the N-terminus, the 331-residue chain is Proton-translocating ferredoxin:NAD(+) oxidoreductase complex subunit D (331 aa).

The next 3 helical transmembrane spans lie at 23-43 (ESVSKIMWSVCLALTPAAVFG), 44-64 (VFNFGIHALEVIITGIIAAVV), and 84-106 (AFLTGLLLSMCLPPDIPPYMVAI). An FMN phosphoryl threonine modification is found at T163. A run of 4 helical transmembrane segments spans residues 196-216 (NGSIGETSTILLVLGGLYLIY), 226-246 (VVMIGTVGILTWAFGGTTGIF), 251-271 (VFHMMAGGLVIGAFFMATDMV), and 273-293 (IPMTIKGQIIFALGAGALTSL).

It belongs to the NqrB/RnfD family. In terms of assembly, the complex is composed of six subunits: RnfA, RnfB, RnfC, RnfD, RnfE and RnfG. Requires FMN as cofactor.

It is found in the cell membrane. Its function is as follows. Part of a membrane-bound complex that couples electron transfer with translocation of ions across the membrane. Couples electron transfer from reduced ferredoxin to NAD(+) with translocation of H(+) out of the cell. Essential for energy conservation during autotrophic growth. Contributes to ATP synthesis during heterotrophic growth. The sequence is that of Proton-translocating ferredoxin:NAD(+) oxidoreductase complex subunit D from Clostridium ljungdahlii (strain ATCC 55383 / DSM 13528 / PETC).